The following is a 402-amino-acid chain: Prophage integrase IntZ (402 aa).

The Core-binding (CB) domain occupies 103–183 (AGFKKVAEDW…RIGEIFKFAV (81 aa)). The Tyr recombinase domain maps to 206–381 (GHNAWIPISE…AYLKQRRAMM (176 aa)). Active-site residues include Arg-244, Lys-271, His-332, Arg-335, and His-359. Tyr-368 acts as the O-(3'-phospho-DNA)-tyrosine intermediate in catalysis.

It belongs to the 'phage' integrase family.

Its function is as follows. Integrase is necessary for integration of the phage into the host genome by site-specific recombination. In conjunction with excisionase, integrase is also necessary for excision of the prophage from the host genome. In Escherichia coli (strain K12), this protein is Prophage integrase IntZ (intZ).